The sequence spans 540 residues: Acetyl-coenzyme A carboxylase carboxyl transferase subunit beta, chloroplastic (540 aa).

The tract at residues 229–249 is disordered; the sequence is YSDNGSSSIRTRTSTSSGSSY. A compositionally biased stretch (low complexity) spans 233 to 248; sequence GSSSIRTRTSTSSGSS. Residues 267–538 form the CoA carboxyltransferase N-terminal domain; sequence LWVQCENCYA…TFHPLKSNKV (272 aa). Zn(2+) is bound by residues C271, C274, C290, and C293. The C4-type zinc-finger motif lies at 271 to 293; sequence CENCYALNYNKLFRSKMNVCEQC.

This sequence belongs to the AccD/PCCB family. Acetyl-CoA carboxylase is a heterohexamer composed of biotin carboxyl carrier protein, biotin carboxylase and 2 subunits each of ACCase subunit alpha and ACCase plastid-coded subunit beta (accD). The cofactor is Zn(2+).

The protein localises to the plastid. It is found in the chloroplast stroma. It carries out the reaction N(6)-carboxybiotinyl-L-lysyl-[protein] + acetyl-CoA = N(6)-biotinyl-L-lysyl-[protein] + malonyl-CoA. The protein operates within lipid metabolism; malonyl-CoA biosynthesis; malonyl-CoA from acetyl-CoA: step 1/1. In terms of biological role, component of the acetyl coenzyme A carboxylase (ACC) complex. Biotin carboxylase (BC) catalyzes the carboxylation of biotin on its carrier protein (BCCP) and then the CO(2) group is transferred by the transcarboxylase to acetyl-CoA to form malonyl-CoA. The sequence is that of Acetyl-coenzyme A carboxylase carboxyl transferase subunit beta, chloroplastic from Amborella trichopoda.